A 161-amino-acid chain; its full sequence is MENEPDTICILVDADACPVKAEIYRVAERHNLPVVIVANSFIAIPREAQRVERVVVSGNLDAADDWIAEHSRPGAVVVTADIPLASRALEKGASVIAPNGRIHTQSTIGNTLATRNLIDSLRSAGEVTGGPAPFAPKDRSAFLSALDLAIVRLKRAGFHAS.

It belongs to the UPF0178 family.

The protein is UPF0178 protein BR1979/BS1330_I1973 of Brucella suis biovar 1 (strain 1330).